A 208-amino-acid polypeptide reads, in one-letter code: FMN-dependent NADH:quinone oxidoreductase 1 (208 aa).

This sequence belongs to the azoreductase type 1 family. Homodimer. The cofactor is FMN.

It catalyses the reaction 2 a quinone + NADH + H(+) = 2 a 1,4-benzosemiquinone + NAD(+). The catalysed reaction is N,N-dimethyl-1,4-phenylenediamine + anthranilate + 2 NAD(+) = 2-(4-dimethylaminophenyl)diazenylbenzoate + 2 NADH + 2 H(+). Functionally, quinone reductase that provides resistance to thiol-specific stress caused by electrophilic quinones. Its function is as follows. Also exhibits azoreductase activity. Catalyzes the reductive cleavage of the azo bond in aromatic azo compounds to the corresponding amines. The sequence is that of FMN-dependent NADH:quinone oxidoreductase 1 from Bacillus licheniformis (strain ATCC 14580 / DSM 13 / JCM 2505 / CCUG 7422 / NBRC 12200 / NCIMB 9375 / NCTC 10341 / NRRL NRS-1264 / Gibson 46).